A 483-amino-acid chain; its full sequence is Linamarin synthase 1 (483 aa).

His22 (proton acceptor) is an active-site residue. His22 serves as a coordination point for an anthocyanidin. Asp124 acts as the Charge relay in catalysis. Thr146, Val360, Gln362, His377, Trp380, Asn381, Ser382, and Glu385 together coordinate UDP-alpha-D-glucose. Residue Ala400 coordinates an anthocyanidin. Positions 401 and 402 each coordinate UDP-alpha-D-glucose.

This sequence belongs to the UDP-glycosyltransferase family. As to expression, expressed in the cortex, xylem and phloem parenchyma, and in specific cells in the endodermis of the petiole of the first unfolded leaf.

The catalysed reaction is 2-hydroxy-2-methylpropanenitrile + UDP-alpha-D-glucose = linamarin + UDP + H(+). In terms of biological role, UDP-glucosyltransferase catalyzing in planta synthesis of cyanogenic glucosides. Able to glucosylate acetone cyanohydrin and 2-hydroxy-2-methylbutyronitrile, forming linamarin and lotaustralin. Also accepts, to some extent, a wide range of potential acceptor substrates, including simple alcohols, flavonoids, isoflavonoids and other hydroxynitriles such as p-hydroxymandelonitrile, mandelonitrile, (E)-4-hydroxy-2-methylbut-2-enenitrile and (E)- 2-(hydroxymethyl)but-2-enenitrile. The sequence is that of Linamarin synthase 1 from Manihot esculenta (Cassava).